A 145-amino-acid chain; its full sequence is Antiholin-like protein LrgA (145 aa).

The next 4 helical transmembrane spans lie at P10–I30, F33–C53, N72–S92, and F96–V116.

It belongs to the CidA/LrgA family. LrgA subfamily.

Its subcellular location is the cell membrane. In terms of biological role, inhibits the expression or activity of extracellular murein hydrolases by interacting, possibly with LrgB, with the holin-like proteins CidA and/or CidB. The LrgAB and CidAB proteins may affect the proton motive force of the membrane. May be involved in programmed cell death (PCD), possibly triggering PCD in response to antibiotics and environmental stresses. This is Antiholin-like protein LrgA from Staphylococcus aureus (strain Mu3 / ATCC 700698).